Here is a 351-residue protein sequence, read N- to C-terminus: Ion-translocating oxidoreductase complex subunit D (351 aa).

Helical transmembrane passes span 18–38 (IMLL…YFFG), 40–60 (GSLI…GAVL), 87–107 (LPPL…IVIA), and 121–141 (PAMV…TSWL). An FMN phosphoryl threonine modification is found at Thr185. 5 helical membrane-spanning segments follow: residues 211-231 (VLAG…GLLL), 241-261 (IPVS…MIAP), 264-284 (FASP…FFIA), 298-318 (LIFG…GGYP), and 320-340 (GVAF…HYTQ).

The protein belongs to the NqrB/RnfD family. As to quaternary structure, the complex is composed of six subunits: RnfA, RnfB, RnfC, RnfD, RnfE and RnfG. FMN is required as a cofactor.

The protein localises to the cell inner membrane. Its function is as follows. Part of a membrane-bound complex that couples electron transfer with translocation of ions across the membrane. This chain is Ion-translocating oxidoreductase complex subunit D, found in Yersinia pseudotuberculosis serotype I (strain IP32953).